Reading from the N-terminus, the 133-residue chain is Nickel-responsive regulator (133 aa).

His-76, His-87, His-89, and Cys-95 together coordinate Ni(2+).

Belongs to the transcriptional regulatory CopG/NikR family. As to quaternary structure, homotetramer. Requires Ni(2+) as cofactor.

Its function is as follows. Transcriptional repressor of the nikABCDE operon. Is active in the presence of excessive concentrations of intracellular nickel. The protein is Nickel-responsive regulator of Shigella dysenteriae serotype 1 (strain Sd197).